A 498-amino-acid polypeptide reads, in one-letter code: NAD(P)H-quinone oxidoreductase chain 4, chloroplastic (498 aa).

A run of 14 helical transmembrane segments spans residues 4–24 (FPWL…IFLF), 31–51 (VIKW…SYVF), 76–96 (FYWS…TGFI), 113–130 (LFYF…GTFS), 134–154 (ILLF…LLSM), 167–187 (FILY…GMSF), 208–228 (ALEI…SPII), 242–262 (HYST…YGLV), 272–292 (AHSI…IYAA), 305–325 (IAYS…SISD), 330–350 (GAIL…FLAG), 386–406 (LALP…GIIT), 411–431 (LLIT…LTPI), and 463–483 (FISI…DFIF).

The protein belongs to the complex I subunit 4 family.

It is found in the plastid. It localises to the chloroplast thylakoid membrane. It carries out the reaction a plastoquinone + NADH + (n+1) H(+)(in) = a plastoquinol + NAD(+) + n H(+)(out). The enzyme catalyses a plastoquinone + NADPH + (n+1) H(+)(in) = a plastoquinol + NADP(+) + n H(+)(out). In Glycine max (Soybean), this protein is NAD(P)H-quinone oxidoreductase chain 4, chloroplastic.